The sequence spans 37 residues: Large ribosomal subunit protein bL36 (37 aa).

It belongs to the bacterial ribosomal protein bL36 family.

This Aquifex aeolicus (strain VF5) protein is Large ribosomal subunit protein bL36.